The sequence spans 362 residues: Probable protein phosphatase 2C 11 (362 aa).

The PPM-type phosphatase domain occupies Lys-23–Phe-329. 4 residues coordinate Mn(2+): Asp-57, Gly-58, Asp-272, and Asp-320.

This sequence belongs to the PP2C family. Mg(2+) serves as cofactor. Requires Mn(2+) as cofactor.

It catalyses the reaction O-phospho-L-seryl-[protein] + H2O = L-seryl-[protein] + phosphate. It carries out the reaction O-phospho-L-threonyl-[protein] + H2O = L-threonyl-[protein] + phosphate. The polypeptide is Probable protein phosphatase 2C 11 (Oryza sativa subsp. japonica (Rice)).